We begin with the raw amino-acid sequence, 375 residues long: DNA replication and repair protein RecF (375 aa).

30–37 (GENAQGKT) contacts ATP.

This sequence belongs to the RecF family.

It localises to the cytoplasm. Functionally, the RecF protein is involved in DNA metabolism; it is required for DNA replication and normal SOS inducibility. RecF binds preferentially to single-stranded, linear DNA. It also seems to bind ATP. This chain is DNA replication and repair protein RecF, found in Enterococcus faecalis (strain ATCC 700802 / V583).